A 243-amino-acid chain; its full sequence is Carboxy-S-adenosyl-L-methionine synthase (243 aa).

Residues Tyr40, Gly65–Ser67, Asp90–Asn91, Asp118–Ile119, Asn133, and Arg200 each bind S-adenosyl-L-methionine.

Belongs to the class I-like SAM-binding methyltransferase superfamily. Cx-SAM synthase family. In terms of assembly, homodimer.

The catalysed reaction is prephenate + S-adenosyl-L-methionine = carboxy-S-adenosyl-L-methionine + 3-phenylpyruvate + H2O. Catalyzes the conversion of S-adenosyl-L-methionine (SAM) to carboxy-S-adenosyl-L-methionine (Cx-SAM). The protein is Carboxy-S-adenosyl-L-methionine synthase of Shewanella woodyi (strain ATCC 51908 / MS32).